Reading from the N-terminus, the 131-residue chain is Translation initiation factor 5A (131 aa).

Lysine 37 carries the hypusine modification.

It belongs to the eIF-5A family.

The protein localises to the cytoplasm. Its function is as follows. Functions by promoting the formation of the first peptide bond. The protein is Translation initiation factor 5A (eIF5A) of Methanococcus aeolicus (strain ATCC BAA-1280 / DSM 17508 / OCM 812 / Nankai-3).